The following is a 218-amino-acid chain: Glutathione S-transferase PM239X14 (218 aa).

Positions 2-85 (VTVKLYGMAY…YLVAKYGKGS (84 aa)) constitute a GST N-terminal domain. Residues 12-13 (ST), 41-42 (HK), 55-56 (VI), and 69-70 (ES) each bind glutathione. A GST C-terminal domain is found at 93-218 (DPKAYGLFEQ…LLRNSSKEFM (126 aa)).

This sequence belongs to the GST superfamily. Phi family. As to expression, expressed in vegetative rosettes.

The protein localises to the cytoplasm. It localises to the cytosol. It carries out the reaction RX + glutathione = an S-substituted glutathione + a halide anion + H(+). Specifically catalyzes the conjugation of synthetic 1-chloro-2,4-ditrobenzene to GSH. Also functions as a glutathione peroxidase, converting linoleate oxidation products into their corresponding hydroxyacids. This enzyme may thus serve to protect the cell from oxygen toxicity as well as from exogenous toxins such as herbicides. The protein is Glutathione S-transferase PM239X14 of Arabidopsis thaliana (Mouse-ear cress).